Here is an 897-residue protein sequence, read N- to C-terminus: F-BAR domain only protein 1 (897 aa).

Residues 1–276 are mediates membrane-binding; sequence MIHFFHTLQG…VGFEEYLSSL (276 aa). The region spanning 2–248 is the F-BAR domain; that stretch reads IHFFHTLQGE…NVENIGIENL (247 aa). Residues 134-154 are a coiled coil; the sequence is LQKTREGYHSKCVELERLRKE. Residues 475–537 are disordered; that stretch reads VEDSGLDSPS…PNPAPSSQSN (63 aa). Polar residues predominate over residues 501–520; that stretch reads PSSQSQSKDSINAASQSRGG. The MHD domain maps to 630–894; it reads SWPVAAAITE…RFATGKYMAG (265 aa).

Belongs to the FCHO family. May oligomerize and form homotetramer. Interacts with acvr1l/alk8; linking this receptor to clathrin-mediated endocytosis.

It localises to the membrane. The protein localises to the clathrin-coated pit. Functionally, may function in an early step of clathrin-mediated endocytosis. May regulate Bmp signaling by regulating clathrin-mediated endocytosis of Bmp receptors. In Danio rerio (Zebrafish), this protein is F-BAR domain only protein 1 (fcho1).